The following is a 465-amino-acid chain: Exoenzymes regulatory protein AepA (465 aa).

The signal sequence occupies residues 1 to 21 (MKFNVKMLSVTLGLFTSHAFA).

This sequence belongs to the metallo-dependent hydrolases superfamily.

Its function is as follows. Involved in the control of extracellular enzymes production. Stimulates PEL, PEH, CEL, and PRT production. This chain is Exoenzymes regulatory protein AepA (aepA), found in Pectobacterium carotovorum subsp. carotovorum (Erwinia carotovora subsp. carotovora).